The following is a 375-amino-acid chain: Citrate synthase (375 aa).

Catalysis depends on residues His-266 and Asp-317.

It belongs to the citrate synthase family. Homohexamer.

The catalysed reaction is oxaloacetate + acetyl-CoA + H2O = citrate + CoA + H(+). The protein operates within carbohydrate metabolism; tricarboxylic acid cycle; isocitrate from oxaloacetate: step 1/2. Allosterically inhibited by NADH. In Mycolicibacterium smegmatis (Mycobacterium smegmatis), this protein is Citrate synthase (gltA).